Consider the following 139-residue polypeptide: D-ribose pyranase (139 aa).

H20 (proton donor) is an active-site residue. Substrate contacts are provided by residues D28, H106, and 128 to 130 (YAN).

The protein belongs to the RbsD / FucU family. RbsD subfamily. Homodecamer.

It is found in the cytoplasm. It carries out the reaction beta-D-ribopyranose = beta-D-ribofuranose. It functions in the pathway carbohydrate metabolism; D-ribose degradation; D-ribose 5-phosphate from beta-D-ribopyranose: step 1/2. Its function is as follows. Catalyzes the interconversion of beta-pyran and beta-furan forms of D-ribose. This chain is D-ribose pyranase, found in Salmonella agona (strain SL483).